Consider the following 114-residue polypeptide: Ribonuclease P protein component (114 aa).

It belongs to the RnpA family. Consists of a catalytic RNA component (M1 or rnpB) and a protein subunit.

It carries out the reaction Endonucleolytic cleavage of RNA, removing 5'-extranucleotides from tRNA precursor.. Its function is as follows. RNaseP catalyzes the removal of the 5'-leader sequence from pre-tRNA to produce the mature 5'-terminus. It can also cleave other RNA substrates such as 4.5S RNA. The protein component plays an auxiliary but essential role in vivo by binding to the 5'-leader sequence and broadening the substrate specificity of the ribozyme. The polypeptide is Ribonuclease P protein component (Legionella pneumophila (strain Lens)).